A 396-amino-acid chain; its full sequence is Elongation factor Tu (396 aa).

The region spanning 10-206 is the tr-type G domain; the sequence is KPHVNVGTIG…ALDSYIPEPE (197 aa). The G1 stretch occupies residues 19–26; sequence GHVDHGKT. 19–26 provides a ligand contact to GTP; that stretch reads GHVDHGKT. Threonine 26 is a Mg(2+) binding site. The interval 60 to 64 is G2; that stretch reads GITIN. The tract at residues 81–84 is G3; sequence DCPG. Residues 81–85 and 136–139 each bind GTP; these read DCPGH and NKCD. The G4 stretch occupies residues 136 to 139; it reads NKCD. The G5 stretch occupies residues 174-176; the sequence is SAL.

Belongs to the TRAFAC class translation factor GTPase superfamily. Classic translation factor GTPase family. EF-Tu/EF-1A subfamily. In terms of assembly, monomer.

It localises to the cytoplasm. The catalysed reaction is GTP + H2O = GDP + phosphate + H(+). Functionally, GTP hydrolase that promotes the GTP-dependent binding of aminoacyl-tRNA to the A-site of ribosomes during protein biosynthesis. In Acinetobacter baumannii (strain ATCC 17978 / DSM 105126 / CIP 53.77 / LMG 1025 / NCDC KC755 / 5377), this protein is Elongation factor Tu.